A 423-amino-acid polypeptide reads, in one-letter code: Amino sugar nitrososynthase RubN8 (423 aa).

Belongs to the acyl-CoA dehydrogenase family. It depends on FAD as a cofactor.

It participates in antibiotic biosynthesis. Its function is as follows. Nitrososynthase involved in the biosynthesis of rubradirin, an ansamycin antibiotic. In vitro, catalyzes the double-oxidation of TDP-L-epi-vancosamine to TDP-L-epi-vancosonitrose. In vivo, probably catalyzes the formation of D-rubranitrose, the nitro sugar moiety of rubradirin. The chain is Amino sugar nitrososynthase RubN8 from Streptomyces rubradiris (Streptomyces achromogenes subsp. rubradiris).